A 627-amino-acid polypeptide reads, in one-letter code: Protein fem-1 homolog B (627 aa).

ANK repeat units lie at residues 45-74 (QRSTPLIIAARNGHAKVVRLLLEHYRVQTQ), 87-116 (DGATALWCAAGAGHFEVVKLLVSHGANVNH), 120-149 (TNSTPLRAACFDGRLDIVKYLVENNANISI), and 153-182 (YDNTCLMIAAYKGHTDVVRYLLEQRADPNA). Positions 185, 186, and 218 each coordinate Zn(2+). ANK repeat units follow at residues 186 to 215 (CGATALHFAAEAGHIDIVKELIKWRAAIVV) and 218 to 248 (HGMTPLKVAAESCKADVVELLLSHADCDRRS). One copy of the TPR repeat lies at 344–377 (SHPIIYRGAVYADNMEFEQCIKLWLHALHLRQKG). 2 ANK repeats span residues 483–527 (EGFS…EVNA) and 531–568 (EGNSALHIIVQYNRPISDFLTLHSIIISLVEAGAHTDM).

Belongs to the fem-1 family. As to quaternary structure, component of a CRL2 E3 ubiquitin-protein ligase complex, also named ECS (Elongin BC-CUL2/5-SOCS-box protein) complex, composed of CUL2, Elongin BC (ELOB and ELOC), RBX1 and substrate-specific adapter FEM1B. Homooligomer. Interacts with PPM1F and PHTF1. Interacts with the death domain of FAS/TNFRSF6 and TNFRSF1A. Interacts with CHEK1. Interacts with NKX3-1. As to expression, expressed in pancreatic islets, within both beta cells and non-beta cells (at protein level). Highly expressed in adult testis; expressed in all types of spermatogonia. Also expressed in the prostate of neonatal mice.

The protein localises to the cytoplasm. The protein resides in the nucleus. Its pathway is protein modification; protein ubiquitination. With respect to regulation, activity of the CRL2(FEM1B) complex toward FNIP1 is inhibited by BEX family proteins (BEX1, BEX2, BEX3 and/or BEX4) in absence of reductive stress. Mechanistically, BEX proteins act as pseudosubstrate inhibitors that associate with FEM1B via zinc in absence of reductive stress, thereby preventing association between FEM1B and FNIP1. Its function is as follows. Substrate-recognition component of a Cul2-RING (CRL2) E3 ubiquitin-protein ligase complex of the DesCEND (destruction via C-end degrons) pathway, which recognizes a C-degron located at the extreme C terminus of target proteins, leading to their ubiquitination and degradation. The C-degron recognized by the DesCEND pathway is usually a motif of less than ten residues and can be present in full-length proteins, truncated proteins or proteolytically cleaved forms. The CRL2(FEM1B) complex specifically recognizes proteins ending with -Gly-Leu-Asp-Arg, such as CDK5R1, leading to their ubiquitination and degradation. Also acts as a regulator of the reductive stress response by mediating ubiquitination of reduced FNIP1: in response to reductive stress, the CRL2(FEM1B) complex specifically recognizes a conserved Cys degron in FNIP1 when this degron is reduced, leading to FNIP1 degradation and subsequent activation of mitochondria to recalibrate reactive oxygen species (ROS). Mechanistically, recognizes and binds reduced FNIP1 through two interface zinc ions, which act as a molecular glue that recruit reduced FNIP1 to FEM1B. Promotes ubiquitination of GLI1, suppressing GLI1 transcriptional activator activity. Promotes ubiquitination and degradation of ANKRD37. Promotes ubiquitination and degradation of SLBP. Involved in apoptosis by acting as a death receptor-associated protein that mediates apoptosis. Also involved in glucose homeostasis in pancreatic islet. May also act as an adapter/mediator in replication stress-induced signaling that leads to the activation of CHEK1. The protein is Protein fem-1 homolog B of Mus musculus (Mouse).